The chain runs to 73 residues: uncharacterized protein (73 aa).

This is an uncharacterized protein from Sus scrofa (Pig).